We begin with the raw amino-acid sequence, 341 residues long: Cathepsin B-like cysteine proteinase 1 (341 aa).

Residues M1–A19 form the signal peptide. Positions E20 to N88 are cleaved as a propeptide — activation peptide. N-linked (GlcNAc...) asparagine glycosylation occurs at N103. Cystine bridges form between C104–C133, C116–C160, C152–C218, C153–C156, C189–C222, and C197–C209. Residue C119 is part of the active site. Residue N202 is glycosylated (N-linked (GlcNAc...) asparagine). Residues H288 and N308 contribute to the active site.

This sequence belongs to the peptidase C1 family.

In terms of biological role, expression of the protease correlates with blood-feeding and suggests a role for the protease in blood digestion. This Ostertagia ostertagi (Brown stomach worm) protein is Cathepsin B-like cysteine proteinase 1 (CP-1).